Consider the following 180-residue polypeptide: NAD(P)H-quinone oxidoreductase subunit I, chloroplastic (180 aa).

2 consecutive 4Fe-4S ferredoxin-type domains span residues 55-84 and 95-124; these read GRIHFELDKCIACEVCVRVCPIDLPVVDWR and LNYSIDFGICIFCGNCVEYCPTNCLSMTEE. Positions 64, 67, 70, 74, 104, 107, 110, and 114 each coordinate [4Fe-4S] cluster.

The protein belongs to the complex I 23 kDa subunit family. In terms of assembly, NDH is composed of at least 16 different subunits, 5 of which are encoded in the nucleus. [4Fe-4S] cluster serves as cofactor.

Its subcellular location is the plastid. The protein localises to the chloroplast thylakoid membrane. It catalyses the reaction a plastoquinone + NADH + (n+1) H(+)(in) = a plastoquinol + NAD(+) + n H(+)(out). It carries out the reaction a plastoquinone + NADPH + (n+1) H(+)(in) = a plastoquinol + NADP(+) + n H(+)(out). Its function is as follows. NDH shuttles electrons from NAD(P)H:plastoquinone, via FMN and iron-sulfur (Fe-S) centers, to quinones in the photosynthetic chain and possibly in a chloroplast respiratory chain. The immediate electron acceptor for the enzyme in this species is believed to be plastoquinone. Couples the redox reaction to proton translocation, and thus conserves the redox energy in a proton gradient. The polypeptide is NAD(P)H-quinone oxidoreductase subunit I, chloroplastic (Chloranthus spicatus (Chulantree)).